The following is a 170-amino-acid chain: ATP synthase subunit b (170 aa).

Residues 22 to 41 form a helical membrane-spanning segment; that stretch reads ILNWAVVVFGLYKFLPGFLG. Residues 72-98 form a disordered region; that stretch reads AKKDLSSAEEKASQIKADSLKRSESIR.

Belongs to the ATPase B chain family. In terms of assembly, F-type ATPases have 2 components, F(1) - the catalytic core - and F(0) - the membrane proton channel. F(1) has five subunits: alpha(3), beta(3), gamma(1), delta(1), epsilon(1). F(0) has four main subunits: a(1), b(1), b'(1) and c(10-14). The alpha and beta chains form an alternating ring which encloses part of the gamma chain. F(1) is attached to F(0) by a central stalk formed by the gamma and epsilon chains, while a peripheral stalk is formed by the delta, b and b' chains.

The protein resides in the cellular thylakoid membrane. Its function is as follows. F(1)F(0) ATP synthase produces ATP from ADP in the presence of a proton or sodium gradient. F-type ATPases consist of two structural domains, F(1) containing the extramembraneous catalytic core and F(0) containing the membrane proton channel, linked together by a central stalk and a peripheral stalk. During catalysis, ATP synthesis in the catalytic domain of F(1) is coupled via a rotary mechanism of the central stalk subunits to proton translocation. In terms of biological role, component of the F(0) channel, it forms part of the peripheral stalk, linking F(1) to F(0). This is ATP synthase subunit b from Prochlorococcus marinus (strain MIT 9301).